A 436-amino-acid chain; its full sequence is Ribulose bisphosphate carboxylase large chain (436 aa).

Substrate contacts are provided by Asn104 and Thr154. Residue Lys156 is the Proton acceptor of the active site. Residue Lys158 participates in substrate binding. Mg(2+)-binding residues include Lys182, Asp184, and Glu185. Residue Lys182 is modified to N6-carboxylysine. His275 (proton acceptor) is an active-site residue. Residues Arg276, His308, and Ser360 each coordinate substrate.

This sequence belongs to the RuBisCO large chain family. Type I subfamily. Heterohexadecamer of 8 large chains and 8 small chains. It depends on Mg(2+) as a cofactor.

It is found in the plastid. Its subcellular location is the chloroplast. The enzyme catalyses 2 (2R)-3-phosphoglycerate + 2 H(+) = D-ribulose 1,5-bisphosphate + CO2 + H2O. The catalysed reaction is D-ribulose 1,5-bisphosphate + O2 = 2-phosphoglycolate + (2R)-3-phosphoglycerate + 2 H(+). In terms of biological role, ruBisCO catalyzes two reactions: the carboxylation of D-ribulose 1,5-bisphosphate, the primary event in carbon dioxide fixation, as well as the oxidative fragmentation of the pentose substrate in the photorespiration process. Both reactions occur simultaneously and in competition at the same active site. The chain is Ribulose bisphosphate carboxylase large chain from Euglena myxocylindracea.